Reading from the N-terminus, the 195-residue chain is Adenylate kinase (195 aa).

10–15 lines the ATP pocket; that stretch reads GSGKGT. An NMP region spans residues 30–59; it reads STGDILRAERAAGTLLGQQAQSYMDRGELV. Residues Thr-31, Arg-36, 57-59, 85-88, and Gln-92 contribute to the AMP site; these read ELV and GFPR. Residues 126–140 are LID; it reads NRAKQAVNGQQRSDD. Position 127 (Arg-127) interacts with ATP. Residues Arg-137 and Arg-148 each contribute to the AMP site. Arg-176 contributes to the ATP binding site.

It belongs to the adenylate kinase family. In terms of assembly, monomer.

It is found in the cytoplasm. The catalysed reaction is AMP + ATP = 2 ADP. It functions in the pathway purine metabolism; AMP biosynthesis via salvage pathway; AMP from ADP: step 1/1. Catalyzes the reversible transfer of the terminal phosphate group between ATP and AMP. Plays an important role in cellular energy homeostasis and in adenine nucleotide metabolism. The sequence is that of Adenylate kinase from Thermosynechococcus vestitus (strain NIES-2133 / IAM M-273 / BP-1).